The primary structure comprises 149 residues: Large ribosomal subunit protein bL9 (149 aa).

Belongs to the bacterial ribosomal protein bL9 family.

Its function is as follows. Binds to the 23S rRNA. In Legionella pneumophila subsp. pneumophila (strain Philadelphia 1 / ATCC 33152 / DSM 7513), this protein is Large ribosomal subunit protein bL9.